Reading from the N-terminus, the 425-residue chain is L-cysteine:1D-myo-inositol 2-amino-2-deoxy-alpha-D-glucopyranoside ligase (425 aa).

Cys43 lines the Zn(2+) pocket. L-cysteinyl-5'-AMP-binding positions include 43–46, Ser58, and 81–83; these read CGIT and NVT. The short motif at 45–55 is the 'HIGH' region element; it reads ITPYDATHMGH. Positions 199–204 match the 'ERGGDP' region motif; that stretch reads ERGGDP. Trp240 provides a ligand contact to L-cysteinyl-5'-AMP. Cys244 lines the Zn(2+) pocket. 262 to 264 contacts L-cysteinyl-5'-AMP; that stretch reads GSD. His269 serves as a coordination point for Zn(2+). Val295 serves as a coordination point for L-cysteinyl-5'-AMP. The 'KMSKS' region signature appears at 301 to 305; sequence KMSKS.

Belongs to the class-I aminoacyl-tRNA synthetase family. MshC subfamily. As to quaternary structure, monomer. Requires Zn(2+) as cofactor.

The catalysed reaction is 1D-myo-inositol 2-amino-2-deoxy-alpha-D-glucopyranoside + L-cysteine + ATP = 1D-myo-inositol 2-(L-cysteinylamino)-2-deoxy-alpha-D-glucopyranoside + AMP + diphosphate + H(+). Its function is as follows. Catalyzes the ATP-dependent condensation of GlcN-Ins and L-cysteine to form L-Cys-GlcN-Ins. The sequence is that of L-cysteine:1D-myo-inositol 2-amino-2-deoxy-alpha-D-glucopyranoside ligase from Paenarthrobacter aurescens (strain TC1).